A 279-amino-acid chain; its full sequence is Thymidylate synthase (279 aa).

Arg37 serves as a coordination point for dUMP. Residue His67 participates in (6R)-5,10-methylene-5,6,7,8-tetrahydrofolate binding. Residue 142-143 (RR) coordinates dUMP. Catalysis depends on Cys162, which acts as the Nucleophile. DUMP-binding positions include 182-185 (RSAD), Asn193, and 223-225 (HLY). Residue Asp185 participates in (6R)-5,10-methylene-5,6,7,8-tetrahydrofolate binding. Residue Ser278 participates in (6R)-5,10-methylene-5,6,7,8-tetrahydrofolate binding.

It belongs to the thymidylate synthase family. Bacterial-type ThyA subfamily. In terms of assembly, homodimer.

It localises to the cytoplasm. It catalyses the reaction dUMP + (6R)-5,10-methylene-5,6,7,8-tetrahydrofolate = 7,8-dihydrofolate + dTMP. It functions in the pathway pyrimidine metabolism; dTTP biosynthesis. Functionally, catalyzes the reductive methylation of 2'-deoxyuridine-5'-monophosphate (dUMP) to 2'-deoxythymidine-5'-monophosphate (dTMP) while utilizing 5,10-methylenetetrahydrofolate (mTHF) as the methyl donor and reductant in the reaction, yielding dihydrofolate (DHF) as a by-product. This enzymatic reaction provides an intracellular de novo source of dTMP, an essential precursor for DNA biosynthesis. The protein is Thymidylate synthase of Caulobacter vibrioides (strain ATCC 19089 / CIP 103742 / CB 15) (Caulobacter crescentus).